Here is a 349-residue protein sequence, read N- to C-terminus: MNREELFDVTVIGGGPAGLYSAFYSGLREMKTKIIEFQPQLGGKIHVYPEKMIWDVGGLLPVTGDKLIEQLVQQGLTFQPEVVLNTKVESIIRNKDGTFTLKANDGKEHFSKTVIVATGSGILKPQKLSIEGAERFEVSNLNYTVKSLKRFKDKTIIISGGGNSAVDWANELEPIAKKVYVTYRKEELSGHEAQVKQLLNSSAECFFHTSITKLIAGDSHEAIEYVELTNHETGEVSHLLIDEVIINHGYERDITLLENSELDVAIIDNFYIAGNANSESSVDGLYAAGDILKHEGKLHLIAGAFQDAGNAVNKAKQFIQPDASEYGMVSSHNEVFKKRNRELIKQMMK.

FAD is bound by residues Glu-36, Lys-44, Tyr-48, Val-88, Leu-123, Asp-290, and Ser-331.

The protein belongs to the ferredoxin--NADP reductase type 2 family. In terms of assembly, homodimer. FAD is required as a cofactor.

The enzyme catalyses 2 reduced [2Fe-2S]-[ferredoxin] + NADP(+) + H(+) = 2 oxidized [2Fe-2S]-[ferredoxin] + NADPH. This Bacillus cereus (strain ATCC 10987 / NRS 248) protein is Ferredoxin--NADP reductase 1.